Here is a 337-residue protein sequence, read N- to C-terminus: Transcription factor HBI1 (337 aa).

Residues 119–180 (VALKNKRKPE…SKGASENQKL (62 aa)) are disordered. Over residues 126-151 (KPEVKTREEQKTEKKIKVEAETESSM) the composition is skewed to basic and acidic residues. The span at 152–165 (KGKSNMGNTEASSD) shows a compositional bias: polar residues. The region spanning 191–241 (QATDRHSLAERARREKISKKMKYLQDIVPGCNKVTGKAGMLDEIINYVQCL) is the bHLH domain.

As to quaternary structure, homodimer. Interacts with IBH1. In terms of tissue distribution, highly expressed in hypocotyls and cotyledons. Expressed in leaves, stems, and flowers.

It localises to the nucleus. Atypical bHLH transcription factor that acts as a positive regulator of cell elongation downstream of multiple external and endogenous signals by direct binding to the promoters and activation of the two expansin genes EXPA1 and EXPA8, encoding cell wall loosening enzymes. Transcriptional activity is inhibited when binding to the bHLH transcription factor IBH1. This is Transcription factor HBI1 (HBI1) from Arabidopsis thaliana (Mouse-ear cress).